Here is a 148-residue protein sequence, read N- to C-terminus: Large ribosomal subunit protein uL15 (148 aa).

Residues 1 to 30 (MSTHKKKTRKLRGHVSHGHGRIGKHRKHPG) show a composition bias toward basic residues. The tract at residues 1 to 37 (MSTHKKKTRKLRGHVSHGHGRIGKHRKHPGGRGNAGG) is disordered.

This sequence belongs to the universal ribosomal protein uL15 family.

The protein is Large ribosomal subunit protein uL15 (RpL27A) of Tenebrio molitor (Yellow mealworm beetle).